Here is a 524-residue protein sequence, read N- to C-terminus: CTP synthase (524 aa).

The interval 1–263 (MKKYVIVTGG…HEKIASKLNV (263 aa)) is amidoligase domain. Ser-13 serves as a coordination point for CTP. A UTP-binding site is contributed by Ser-13. ATP-binding positions include 14–19 (GIGKGI) and Asp-71. The Mg(2+) site is built by Asp-71 and Glu-137. Residues 144–146 (DIE), 184–189 (KTKPTQ), and Lys-220 contribute to the CTP site. UTP is bound by residues 184 to 189 (KTKPTQ) and Lys-220. The 243-residue stretch at 282-524 (RIALVGKYLG…YLRKVLEGSQ (243 aa)) folds into the Glutamine amidotransferase type-1 domain. Residue Gly-342 participates in L-glutamine binding. The Nucleophile; for glutamine hydrolysis role is filled by Cys-369. L-glutamine is bound by residues 370-373 (LGMQ), Glu-393, and Arg-451. Residues His-499 and Glu-501 contribute to the active site.

Belongs to the CTP synthase family. In terms of assembly, homotetramer.

It catalyses the reaction UTP + L-glutamine + ATP + H2O = CTP + L-glutamate + ADP + phosphate + 2 H(+). The catalysed reaction is L-glutamine + H2O = L-glutamate + NH4(+). The enzyme catalyses UTP + NH4(+) + ATP = CTP + ADP + phosphate + 2 H(+). The protein operates within pyrimidine metabolism; CTP biosynthesis via de novo pathway; CTP from UDP: step 2/2. With respect to regulation, allosterically activated by GTP, when glutamine is the substrate; GTP has no effect on the reaction when ammonia is the substrate. The allosteric effector GTP functions by stabilizing the protein conformation that binds the tetrahedral intermediate(s) formed during glutamine hydrolysis. Inhibited by the product CTP, via allosteric rather than competitive inhibition. Catalyzes the ATP-dependent amination of UTP to CTP with either L-glutamine or ammonia as the source of nitrogen. Regulates intracellular CTP levels through interactions with the four ribonucleotide triphosphates. The chain is CTP synthase from Thermotoga maritima (strain ATCC 43589 / DSM 3109 / JCM 10099 / NBRC 100826 / MSB8).